The primary structure comprises 646 residues: Serine/threonine-protein kinase max-2 (646 aa).

The disordered stretch occupies residues 19-40 (FSPSDKDKDRDDEMKPSSSAMD). Positions 22 to 33 (SDKDKDRDDEMK) are enriched in basic and acidic residues. A CRIB domain is found at 41 to 54 (ISQPYNTVHRVHVG). Residues 136–345 (LQCSNGSATS…PPPPEEPPVR (210 aa)) are disordered. Low complexity-rich tracts occupy residues 142 to 157 (SATS…SSSA) and 167 to 180 (LSTA…LSLS). A compositionally biased stretch (polar residues) spans 196-205 (SAPQLKTFTG). The segment covering 214 to 223 (SPFPPQPPVL) has biased composition (pro residues). Positions 229-245 (TASAVATTTTNPTTSNG) are enriched in low complexity. Residues 246 to 262 (APPPVPGSKGPPVPPKP) are compositionally biased toward pro residues. 2 stretches are compositionally biased toward low complexity: residues 273–307 (SSGC…DGDV) and 323–334 (KNGNTTTNKTTV). The region spanning 376–627 (YEMKKQIGVG…TTELLAHPFL (252 aa)) is the Protein kinase domain. ATP is bound by residues 382–390 (IGVGASGTV) and Lys-405. Asp-496 functions as the Proton acceptor in the catalytic mechanism.

This sequence belongs to the protein kinase superfamily. STE Ser/Thr protein kinase family. STE20 subfamily. Interacts with mlk-1; the interaction is independent of max-2 and mlk-1 kinase activities. Interacts with mig-2 (GTP-bound form). Mg(2+) is required as a cofactor.

It localises to the perikaryon. It is found in the cell projection. The protein resides in the dendrite. The protein localises to the cytoplasm. The enzyme catalyses L-seryl-[protein] + ATP = O-phospho-L-seryl-[protein] + ADP + H(+). The catalysed reaction is L-threonyl-[protein] + ATP = O-phospho-L-threonyl-[protein] + ADP + H(+). Its function is as follows. Serine/threonine-protein kinase, which phosphorylates mlk-1. Involved in the stress response to heavy metals by activating the mlk-1/mek-1/kgb-1 pathway. In ventral cord commissural motoneurons, required for dorsal axon guidance downstream of unc-6/netrin repulsion receptor unc-5 and probably of Rho GTPases ced-10 and mig-2. Plays a redundant role with mig-10 in orientating axonal growth of HSN neurons. Plays a redundant role with pak-1 in P neuroblast migration and in distal tip cell (DTC)-mediated guidance of gonad elongation probably downstream of Rho GTPases. In association with pak-2, plays a role in embryogenesis. In association with pak-1, may be involved in spermatogenesis. This chain is Serine/threonine-protein kinase max-2, found in Caenorhabditis elegans.